The sequence spans 96 residues: Putative pterin-4-alpha-carbinolamine dehydratase (96 aa).

The protein belongs to the pterin-4-alpha-carbinolamine dehydratase family.

The catalysed reaction is (4aS,6R)-4a-hydroxy-L-erythro-5,6,7,8-tetrahydrobiopterin = (6R)-L-erythro-6,7-dihydrobiopterin + H2O. The polypeptide is Putative pterin-4-alpha-carbinolamine dehydratase (Paraburkholderia xenovorans (strain LB400)).